We begin with the raw amino-acid sequence, 476 residues long: MKILHVCSELYPLLKTGGLADVLGALPQAQNQIGLDARVLLPAYPAIIAGIQNTQVVAEFDNFAGHVVLRYGEYNGVGIYLIDAPHLYGREGNPYHDAYYNDYGDNYKRFALLGWVGAELATGLDSWWRAEVVHAHDWHAGLCAAYLFNKGRPAKSVFTIHNLAYQGQFSYHHLYEIGLPTGMFHVEGLELFGQISYLKSGLFYSDASTAVSPTYAEEITTPEFAYGLQGLLSGLKAQGRLVGILNGVDENIWHPNVDQYIPHHYKLKYMAGKKKNKAELQAYFNLPQDESALAFVMVTRLTEQKGVDLLIESADEIVKQGGQLMILGSGAPHFEQGIRELAERYPQNIAVKIGYDEALSHLMVAGGDVILVPSRFEPCGLTQLYGLQYGTLPLVRKTGGLADTVVDSTSESIKARTATGFVFESATPEALRHCLQRAFALWQKPRAWAMVRTDAMEQDFSWRKAAEQYRTLYERL.

Lys-15 is an ADP-alpha-D-glucose binding site.

The protein belongs to the glycosyltransferase 1 family. Bacterial/plant glycogen synthase subfamily.

The enzyme catalyses [(1-&gt;4)-alpha-D-glucosyl](n) + ADP-alpha-D-glucose = [(1-&gt;4)-alpha-D-glucosyl](n+1) + ADP + H(+). It participates in glycan biosynthesis; glycogen biosynthesis. Functionally, synthesizes alpha-1,4-glucan chains using ADP-glucose. This Haemophilus influenzae (strain 86-028NP) protein is Glycogen synthase.